The sequence spans 63 residues: Large ribosomal subunit protein uL29 (63 aa).

It belongs to the universal ribosomal protein uL29 family.

This chain is Large ribosomal subunit protein uL29, found in Sodalis glossinidius (strain morsitans).